Consider the following 760-residue polypeptide: Transferrin receptor protein 1 (760 aa).

Over 1 to 67 the chain is Cytoplasmic; it reads MMDQARSAFS…KPKRCSGSIC (67 aa). The tract at residues 1–67 is mediates interaction with SH3BP4; the sequence is MMDQARSAFS…KPKRCSGSIC (67 aa). Phosphoserine is present on residues Ser-10 and Ser-19. A Phosphotyrosine modification is found at Tyr-20. An Endocytosis signal motif is present at residues 20–23; that stretch reads YTRF. At Thr-21 the chain carries Phosphothreonine. At Ser-24 the chain carries Phosphoserine. The Stop-transfer sequence signature appears at 58–61; it reads KPKR. S-palmitoyl cysteine attachment occurs at residues Cys-62 and Cys-67. The chain crosses the membrane as a helical; Signal-anchor for type II membrane protein span at residues 68 to 88; that stretch reads YGTIAVIVFFLIGFMIGYLGY. The Extracellular portion of the chain corresponds to 89-760; sequence CKGVEPKTEC…GDVWDIDNEF (672 aa). Thr-104 carries an O-linked (GalNAc...) threonine glycan. The PA domain maps to 223–313; the sequence is SKAATVTGKL…GTGDPYTPGF (91 aa). Asn-251 and Asn-317 each carry an N-linked (GlcNAc...) asparagine glycan. Residues 569-760 are ligand-binding; sequence TMDTYKELIE…GDVWDIDNEF (192 aa). The Cell attachment site; required for binding to transferrin motif lies at 646-648; the sequence is RGD. An N-linked (GlcNAc...) asparagine glycan is attached at Asn-727.

This sequence belongs to the peptidase M28 family. M28B subfamily. Homodimer; disulfide-linked. Binds one transferrin or HFE molecule per subunit. Binds the HLA class II histocompatibility antigen, DR1. Interacts with SH3BP3. Interacts with STEAP3; facilitates TFRC endocytosis in erythroid precursor cells. Interacts with GRM2. As to quaternary structure, (Microbial infection) Interacts with Guanarito, Junin and Machupo arenavirus glycoprotein complex. In terms of assembly, (Microbial infection) Interacts with rabies virus protein G. (Microbial infection) Interacts with SARS-CoV-2 spike protein S. In terms of processing, stearoylated by ZDHHC6 which inhibits TFRC-mediated activation of the JNK pathway and promotes mitochondrial fragmentation. Stearoylation does not affect iron uptake. N- and O-glycosylated, phosphorylated and palmitoylated. The serum form is only glycosylated. Post-translationally, proteolytically cleaved on Arg-100 to produce the soluble serum form (sTfR). In terms of processing, palmitoylated on both Cys-62 and Cys-67. Cys-62 seems to be the major site of palmitoylation.

The protein resides in the cell membrane. Its subcellular location is the melanosome. It localises to the secreted. In terms of biological role, cellular uptake of iron occurs via receptor-mediated endocytosis of ligand-occupied transferrin receptor into specialized endosomes. Endosomal acidification leads to iron release. The apotransferrin-receptor complex is then recycled to the cell surface with a return to neutral pH and the concomitant loss of affinity of apotransferrin for its receptor. Transferrin receptor is necessary for development of erythrocytes and the nervous system. A second ligand, the hereditary hemochromatosis protein HFE, competes for binding with transferrin for an overlapping C-terminal binding site. Positively regulates T and B cell proliferation through iron uptake. Acts as a lipid sensor that regulates mitochondrial fusion by regulating activation of the JNK pathway. When dietary levels of stearate (C18:0) are low, promotes activation of the JNK pathway, resulting in HUWE1-mediated ubiquitination and subsequent degradation of the mitofusin MFN2 and inhibition of mitochondrial fusion. When dietary levels of stearate (C18:0) are high, TFRC stearoylation inhibits activation of the JNK pathway and thus degradation of the mitofusin MFN2. Mediates uptake of NICOL1 into fibroblasts where it may regulate extracellular matrix production. (Microbial infection) Acts as a receptor for new-world arenaviruses: Guanarito, Junin and Machupo virus. Its function is as follows. (Microbial infection) Acts as a host entry factor for rabies virus that hijacks the endocytosis of TFRC to enter cells. Functionally, (Microbial infection) Acts as a host entry factor for SARS-CoV, MERS-CoV and SARS-CoV-2 viruses that hijack the endocytosis of TFRC to enter cells. The sequence is that of Transferrin receptor protein 1 (TFRC) from Homo sapiens (Human).